The following is a 1040-amino-acid chain: Multidrug resistance protein MdtB (1040 aa).

Transmembrane regions (helical) follow at residues 16 to 36 (FIMR…AGII), 347 to 367 (LMMA…NIPA), 369 to 389 (IIPG…MVFL), 396 to 416 (LTLM…IVVI), 440 to 460 (IGFT…PLLF), 472 to 492 (FAIT…TLTP), 537 to 557 (WLTL…WVFI), 863 to 883 (LGST…VLGI), 888 to 908 (FIHP…ALLA), 911 to 931 (IAGS…IGIV), 968 to 988 (ILMT…STGV), and 998 to 1018 (IGMV…TPVI).

This sequence belongs to the resistance-nodulation-cell division (RND) (TC 2.A.6) family. MdtB subfamily. Part of a tripartite efflux system composed of MdtA, MdtB and MdtC. MdtB forms a heteromultimer with MdtC.

The protein resides in the cell inner membrane. In Shigella sonnei (strain Ss046), this protein is Multidrug resistance protein MdtB.